The following is a 79-amino-acid chain: Delta-hormotoxin-Cpt1b (79 aa).

Positions 1–20 are cleaved as a signal peptide; that stretch reads MKTQVLALFVLCVLFCLAES. Residues 21–31 constitute a propeptide that is removed on maturation; it reads RTTLNKRNDIE. 3 cysteine pairs are disulfide-bonded: Cys36–Cys75, Cys38–Cys66, and Cys56–Cys76.

The protein belongs to the sea anemone sodium channel inhibitory toxin family.

The protein localises to the secreted. It localises to the nematocyst. In neuromuscular preparation of crustaceans, the toxin increased neurotransmitter release, causing repetitive firing of the axons. May affect sodium channels (Nav). This is Delta-hormotoxin-Cpt1b from Calliactis parasitica (Sea anemone).